We begin with the raw amino-acid sequence, 345 residues long: Phosphoribosylformylglycinamidine cyclo-ligase (345 aa).

Belongs to the AIR synthase family.

It localises to the cytoplasm. The enzyme catalyses 2-formamido-N(1)-(5-O-phospho-beta-D-ribosyl)acetamidine + ATP = 5-amino-1-(5-phospho-beta-D-ribosyl)imidazole + ADP + phosphate + H(+). Its pathway is purine metabolism; IMP biosynthesis via de novo pathway; 5-amino-1-(5-phospho-D-ribosyl)imidazole from N(2)-formyl-N(1)-(5-phospho-D-ribosyl)glycinamide: step 2/2. The polypeptide is Phosphoribosylformylglycinamidine cyclo-ligase (Sodalis glossinidius (strain morsitans)).